The primary structure comprises 754 residues: Phosphoribosylformylglycinamidine synthase subunit PurL (754 aa).

His-52 is a catalytic residue. The ATP site is built by Tyr-55 and Lys-95. Glu-97 contacts Mg(2+). Substrate is bound by residues 98–101 (SHNH) and Arg-120. The Proton acceptor role is filled by His-99. Residue Asp-121 coordinates Mg(2+). Gln-244 is a substrate binding site. Asp-272 provides a ligand contact to Mg(2+). Position 316-318 (316-318 (ESQ)) interacts with substrate. ATP contacts are provided by Asn-504 and Gly-541. Asn-542 is a Mg(2+) binding site. Residue Ser-544 participates in substrate binding.

Belongs to the FGAMS family. Monomer. Part of the FGAM synthase complex composed of 1 PurL, 1 PurQ and 2 PurS subunits.

Its subcellular location is the cytoplasm. The enzyme catalyses N(2)-formyl-N(1)-(5-phospho-beta-D-ribosyl)glycinamide + L-glutamine + ATP + H2O = 2-formamido-N(1)-(5-O-phospho-beta-D-ribosyl)acetamidine + L-glutamate + ADP + phosphate + H(+). The protein operates within purine metabolism; IMP biosynthesis via de novo pathway; 5-amino-1-(5-phospho-D-ribosyl)imidazole from N(2)-formyl-N(1)-(5-phospho-D-ribosyl)glycinamide: step 1/2. Functionally, part of the phosphoribosylformylglycinamidine synthase complex involved in the purines biosynthetic pathway. Catalyzes the ATP-dependent conversion of formylglycinamide ribonucleotide (FGAR) and glutamine to yield formylglycinamidine ribonucleotide (FGAM) and glutamate. The FGAM synthase complex is composed of three subunits. PurQ produces an ammonia molecule by converting glutamine to glutamate. PurL transfers the ammonia molecule to FGAR to form FGAM in an ATP-dependent manner. PurS interacts with PurQ and PurL and is thought to assist in the transfer of the ammonia molecule from PurQ to PurL. This is Phosphoribosylformylglycinamidine synthase subunit PurL from Salinibacter ruber (strain DSM 13855 / M31).